The sequence spans 837 residues: Granulocyte colony-stimulating factor receptor (837 aa).

Positions 1–25 are cleaved as a signal peptide; that stretch reads MVGLGACTLTGVTLIFLLLPRSLES. Intrachain disulfides connect C26-C52 and C46-C102. The 93-residue stretch at 26–118 folds into the Ig-like C2-type domain; it reads CGHIEISPPV…SVQLLDQAEL (93 aa). Over 26-626 the chain is Extracellular; the sequence is CGHIEISPPV…LTLRTLDPSD (601 aa). N-linked (GlcNAc...) asparagine glycosylation is found at N51, N94, and N129. Fibronectin type-III domains follow at residues 126 to 231, 236 to 331, 334 to 433, 434 to 529, and 530 to 624; these read SPSN…LEPP, LDIG…LRPT, APTI…NEGP, AVTG…GERA, and PPHA…TLDP. Intrachain disulfides connect C132/C143, C168/C219, C178/C187, C249/C296, and C267/C310. 2 N-linked (GlcNAc...) asparagine glycosylation sites follow: N186 and N279. Residues 319 to 323 carry the WSXWS motif motif; it reads WSPWS. Residues N392, N408, N474, N487, N582, and N613 are each glycosylated (N-linked (GlcNAc...) asparagine). Residues 627 to 650 traverse the membrane as a helical segment; it reads LNIFLGILCLVLLSTTCVVTWLCC. At 651-837 the chain is on the cytoplasmic side; the sequence is KRRGKTSFWS…VHGVEEQGGF (187 aa). The short motif at 658–666 is the Box 1 motif element; the sequence is FWSDVPDPA.

Belongs to the type I cytokine receptor family. Type 2 subfamily. Homodimer. The dimeric receptor binds two CSF3 molecules. Interacts with CEACAM1; down-regulates the CSF3R-STAT3 pathway through recruitment of PTPN6 that dephosphorylates CSF3R. Post-translationally, N-glycosylated. As to expression, found in bone marrow.

It localises to the membrane. Receptor for granulocyte colony-stimulating factor (CSF3). In addition it may function in some adhesion or recognition events at the cell surface. The polypeptide is Granulocyte colony-stimulating factor receptor (Csf3r) (Mus musculus (Mouse)).